Consider the following 566-residue polypeptide: Liver carboxylesterase 1 (566 aa).

Residues 1 to 18 (MWLRALVLATLAAFTAWG) form the signal peptide. N-linked (GlcNAc...) asparagine glycosylation occurs at asparagine 79. Cysteine 87 and cysteine 116 are oxidised to a cystine. Serine 221 serves as the catalytic Acyl-ester intermediate. Cysteine 274 and cysteine 285 are disulfide-bonded. Glutamate 354 acts as the Charge relay system in catalysis. Serine 379 carries the post-translational modification Phosphoserine. Histidine 467 serves as the catalytic Charge relay system.

Belongs to the type-B carboxylesterase/lipase family. As to quaternary structure, homotrimer and homohexamer. Binds to beta-glucuronidase.

Its subcellular location is the endoplasmic reticulum lumen. The protein resides in the cytoplasm. It localises to the lipid droplet. It catalyses the reaction a carboxylic ester + H2O = an alcohol + a carboxylate + H(+). It carries out the reaction cholesteryl (9Z-octadecenoate) + H2O = cholesterol + (9Z)-octadecenoate + H(+). The enzyme catalyses 2-(5Z,8Z,11Z,14Z-eicosatetraenoyl)-glycerol + H2O = glycerol + (5Z,8Z,11Z,14Z)-eicosatetraenoate + H(+). The catalysed reaction is prostaglandin E2 1-glyceryl ester + H2O = prostaglandin E2 + glycerol + H(+). It catalyses the reaction a cholesterol ester + H2O = cholesterol + a fatty acid + H(+). It carries out the reaction prostaglandin F2alpha 1-glyceryl ester + H2O = prostaglandin F2alpha + glycerol + H(+). Its function is as follows. Involved in the detoxification of xenobiotics and in the activation of ester and amide prodrugs. Hydrolyzes aromatic and aliphatic esters, but has no catalytic activity toward amides or a fatty acyl-CoA ester. Displays fatty acid ethyl ester synthase activity, catalyzing the ethyl esterification of oleic acid to ethyloleate. Converts monoacylglycerides to free fatty acids and glycerol. Hydrolyzes of 2-arachidonoylglycerol and prostaglandins. Hydrolyzes cellular cholesteryl esters to free cholesterols and promotes reverse cholesterol transport (RCT) by facilitating both the initial and final steps in the process. First of all, allows free cholesterol efflux from macrophages to extracellular cholesterol acceptors and secondly, releases free cholesterol from lipoprotein-delivered cholesteryl esters in the liver for bile acid synthesis or direct secretion into the bile. The chain is Liver carboxylesterase 1 from Macaca fascicularis (Crab-eating macaque).